Here is a 912-residue protein sequence, read N- to C-terminus: Transferrin-binding protein A (912 aa).

A signal peptide spans 1–23 (MTKKPYFRLSIISCLLISCYVKA). Residues 50–57 (ETISVTAE) carry the TonB box motif. Positions 63-188 (KDNEVTGLGK…LAGSVTFQSK (126 aa)) constitute a TBDR plug domain. The region spanning 199–912 (SWGIQTKNAY…NYTLTLEMKF (714 aa)) is the TBDR beta-barrel domain. The short motif at 895-912 (TRYAASGRNYTLTLEMKF) is the TonB C-terminal box element.

It belongs to the TonB-dependent receptor family.

The protein localises to the cell outer membrane. Haemophilus acquires iron by extracting it from serum transferrin (TF) in its human host. Acts as a transferrin receptor and is required for transferrin utilization. This is Transferrin-binding protein A from Haemophilus influenzae (strain ATCC 51907 / DSM 11121 / KW20 / Rd).